We begin with the raw amino-acid sequence, 659 residues long: UvrABC system protein B (659 aa).

A Helicase ATP-binding domain is found at 25–182 (QSIENGNRGQ…KKLIEIQYER (158 aa)). Residue 38-45 (GVTGSGKT) coordinates ATP. The Beta-hairpin motif lies at 91-114 (YYDYYQPEAYVPQTDTFIEKDASI). Positions 429–582 (QIDDLYGEIQ…QMEYNEEHNI (154 aa)) constitute a Helicase C-terminal domain. One can recognise a UVR domain in the interval 622 to 657 (EKLIEQYEEEMKEAAKNLQFERAAELRDIIKDLKEN).

The protein belongs to the UvrB family. In terms of assembly, forms a heterotetramer with UvrA during the search for lesions. Interacts with UvrC in an incision complex.

The protein resides in the cytoplasm. In terms of biological role, the UvrABC repair system catalyzes the recognition and processing of DNA lesions. A damage recognition complex composed of 2 UvrA and 2 UvrB subunits scans DNA for abnormalities. Upon binding of the UvrA(2)B(2) complex to a putative damaged site, the DNA wraps around one UvrB monomer. DNA wrap is dependent on ATP binding by UvrB and probably causes local melting of the DNA helix, facilitating insertion of UvrB beta-hairpin between the DNA strands. Then UvrB probes one DNA strand for the presence of a lesion. If a lesion is found the UvrA subunits dissociate and the UvrB-DNA preincision complex is formed. This complex is subsequently bound by UvrC and the second UvrB is released. If no lesion is found, the DNA wraps around the other UvrB subunit that will check the other stand for damage. This Clostridium perfringens (strain ATCC 13124 / DSM 756 / JCM 1290 / NCIMB 6125 / NCTC 8237 / Type A) protein is UvrABC system protein B.